The following is a 335-amino-acid chain: Tetraacyldisaccharide 4'-kinase (335 aa).

59-66 (TAGGNGKT) contacts ATP.

The protein belongs to the LpxK family.

The catalysed reaction is a lipid A disaccharide + ATP = a lipid IVA + ADP + H(+). Its pathway is glycolipid biosynthesis; lipid IV(A) biosynthesis; lipid IV(A) from (3R)-3-hydroxytetradecanoyl-[acyl-carrier-protein] and UDP-N-acetyl-alpha-D-glucosamine: step 6/6. Functionally, transfers the gamma-phosphate of ATP to the 4'-position of a tetraacyldisaccharide 1-phosphate intermediate (termed DS-1-P) to form tetraacyldisaccharide 1,4'-bis-phosphate (lipid IVA). The polypeptide is Tetraacyldisaccharide 4'-kinase (Vibrio vulnificus (strain YJ016)).